The chain runs to 253 residues: Sulfate transporter CysZ (253 aa).

A run of 4 helical transmembrane segments spans residues 31 to 51 (FVIL…WWLF), 75 to 95 (LLWP…FSTI), 151 to 171 (IVLL…PVLW), and 222 to 242 (IPLL…AMWV).

The protein belongs to the CysZ family.

The protein localises to the cell inner membrane. High affinity, high specificity proton-dependent sulfate transporter, which mediates sulfate uptake. Provides the sulfur source for the cysteine synthesis pathway. This chain is Sulfate transporter CysZ, found in Escherichia coli O81 (strain ED1a).